The chain runs to 335 residues: Magnesium-protoporphyrin IX monomethyl ester [oxidative] cyclase (335 aa).

This sequence belongs to the AcsF family. Fe cation serves as cofactor.

It is found in the plastid. Its subcellular location is the chloroplast. The enzyme catalyses Mg-protoporphyrin IX 13-monomethyl ester + 3 NADPH + 3 O2 + 2 H(+) = 3,8-divinyl protochlorophyllide a + 3 NADP(+) + 5 H2O. Its pathway is porphyrin-containing compound metabolism; chlorophyll biosynthesis (light-independent). Catalyzes the formation of the isocyclic ring in chlorophyll biosynthesis. Mediates the cyclase reaction, which results in the formation of divinylprotochlorophyllide (Pchlide) characteristic of all chlorophylls from magnesium-protoporphyrin IX 13-monomethyl ester (MgPMME). This chain is Magnesium-protoporphyrin IX monomethyl ester [oxidative] cyclase, found in Cyanidioschyzon merolae (strain NIES-3377 / 10D) (Unicellular red alga).